A 199-amino-acid polypeptide reads, in one-letter code: Recombination protein RecR (199 aa).

Residues 57–72 (CRSCRTFTEESHCPIC) form a C4-type zinc finger. The 96-residue stretch at 81 to 176 (EQICVVETPA…SVSRIAHGVP (96 aa)) folds into the Toprim domain.

It belongs to the RecR family.

Functionally, may play a role in DNA repair. It seems to be involved in an RecBC-independent recombinational process of DNA repair. It may act with RecF and RecO. The protein is Recombination protein RecR of Shewanella sediminis (strain HAW-EB3).